We begin with the raw amino-acid sequence, 248 residues long: 5'-nucleotidase SurE (248 aa).

Positions 8, 9, 39, and 91 each coordinate a divalent metal cation.

This sequence belongs to the SurE nucleotidase family. It depends on a divalent metal cation as a cofactor.

It is found in the cytoplasm. It catalyses the reaction a ribonucleoside 5'-phosphate + H2O = a ribonucleoside + phosphate. In terms of biological role, nucleotidase that shows phosphatase activity on nucleoside 5'-monophosphates. The sequence is that of 5'-nucleotidase SurE from Neisseria meningitidis serogroup A / serotype 4A (strain DSM 15465 / Z2491).